The primary structure comprises 88 residues: Small ribosomal subunit protein bS16c (88 aa).

Belongs to the bacterial ribosomal protein bS16 family.

It is found in the plastid. Its subcellular location is the chloroplast. This is Small ribosomal subunit protein bS16c from Helianthus annuus (Common sunflower).